Reading from the N-terminus, the 118-residue chain is Na(+)/H(+) antiporter subunit G1 (118 aa).

The next 3 membrane-spanning stretches (helical) occupy residues 9–29 (IALI…IGIL), 41–61 (AGKA…LFFI), and 70–90 (QLIV…HLII).

Belongs to the CPA3 antiporters (TC 2.A.63) subunit G family. May form a heterooligomeric complex that consists of seven subunits: mnhA1, mnhB1, mnhC1, mnhD1, mnhE1, mnhF1 and mnhG1.

The protein localises to the cell membrane. Mnh complex is a Na(+)/H(+) antiporter involved in Na(+) excretion. This is Na(+)/H(+) antiporter subunit G1 (mnhG1) from Staphylococcus saprophyticus subsp. saprophyticus (strain ATCC 15305 / DSM 20229 / NCIMB 8711 / NCTC 7292 / S-41).